The following is a 978-amino-acid chain: NACHT, LRR and PYD domains-containing protein 4E (978 aa).

In terms of domain architecture, Pyrin spans 1-93 (MASFFSDFGL…MERAGREIAG (93 aa)). Residues 148-471 (HMVFLQGVAG…FHLLKSHVDH (324 aa)) enclose the NACHT domain. Residue 154-161 (GVAGIGKS) coordinates ATP. 6 LRR repeats span residues 594-617 (CSTLKKLSLSTQNILSEGQEHSYT), 694-717 (LLNLSLTFLSHNDVKLLCDVLNQA), 746-773 (SKMLKHLNLSSNNLDKGISSLSKALCHP), 802-825 (NKTLTHLDISFNDLKDEGLKVLCG), 859-882 (NQNLRNLQISNNKIEDAGVKLLCD), and 916-940 (CKTLLGINLQENALDHSGLVALFEA).

It belongs to the NLRP family.

Its function is as follows. May be involved in inflammation and recognition of cytosolic pathogen-associated molecular patterns (PAMPs) not intercepted by membrane-bound receptors. The sequence is that of NACHT, LRR and PYD domains-containing protein 4E (Nlrp4e) from Mus musculus (Mouse).